The chain runs to 379 residues: Cytochrome b (379 aa).

The next 4 helical transmembrane spans lie at 32 to 52, 76 to 97, 112 to 132, and 177 to 197; these read FGSL…FLAM, WLIR…YMHI, WNVG…GYVL, and FFAF…IHLL. H82 and H96 together coordinate heme b. Heme b contacts are provided by H181 and H195. Position 200 (H200) interacts with a ubiquinone. Helical transmembrane passes span 225–245, 287–307, 319–339, and 346–366; these read YKDL…ALFS, LGGV…PFLH, LTQI…WIGG, and FIII…VLSP.

The protein belongs to the cytochrome b family. As to quaternary structure, the cytochrome bc1 complex contains 3 respiratory subunits (MT-CYB, CYC1 and UQCRFS1), 2 core proteins (UQCRC1 and UQCRC2) and probably 6 low-molecular weight proteins. Requires heme b as cofactor.

It localises to the mitochondrion inner membrane. Component of the ubiquinol-cytochrome c reductase complex (complex III or cytochrome b-c1 complex) that is part of the mitochondrial respiratory chain. The b-c1 complex mediates electron transfer from ubiquinol to cytochrome c. Contributes to the generation of a proton gradient across the mitochondrial membrane that is then used for ATP synthesis. The sequence is that of Cytochrome b (mt-cyb) from Chlorophthalmus agassizi (Shortnose greeneye).